The sequence spans 405 residues: NADH-quinone oxidoreductase subunit D (405 aa).

Belongs to the complex I 49 kDa subunit family. As to quaternary structure, NDH-1 is composed of 14 different subunits. Subunits NuoB, C, D, E, F, and G constitute the peripheral sector of the complex.

It is found in the cell inner membrane. It carries out the reaction a quinone + NADH + 5 H(+)(in) = a quinol + NAD(+) + 4 H(+)(out). Its function is as follows. NDH-1 shuttles electrons from NADH, via FMN and iron-sulfur (Fe-S) centers, to quinones in the respiratory chain. The immediate electron acceptor for the enzyme in this species is believed to be ubiquinone. Couples the redox reaction to proton translocation (for every two electrons transferred, four hydrogen ions are translocated across the cytoplasmic membrane), and thus conserves the redox energy in a proton gradient. The sequence is that of NADH-quinone oxidoreductase subunit D from Leptospira interrogans serogroup Icterohaemorrhagiae serovar copenhageni (strain Fiocruz L1-130).